Consider the following 376-residue polypeptide: Actin, cytoplasmic (376 aa).

The protein belongs to the actin family.

The protein resides in the cytoplasm. The protein localises to the cytoskeleton. The catalysed reaction is ATP + H2O = ADP + phosphate + H(+). Actins are highly conserved proteins that are involved in various types of cell motility and are ubiquitously expressed in all eukaryotic cells. This chain is Actin, cytoplasmic, found in Tetrahymena pyriformis.